A 513-amino-acid polypeptide reads, in one-letter code: Putative ADP-ribosyl glycohydrolase L444 (513 aa).

Residues 1–23 (MSDKIQSRESKTTKPTKTEKISD) show a composition bias toward basic and acidic residues. The segment at 1 to 33 (MSDKIQSRESKTTKPTKTEKISDKSGNLSQVKS) is disordered. The span at 24-33 (KSGNLSQVKS) shows a compositional bias: polar residues.

Belongs to the ADP-ribosylglycohydrolase family.

The polypeptide is Putative ADP-ribosyl glycohydrolase L444 (Acanthamoeba polyphaga mimivirus (APMV)).